A 153-amino-acid polypeptide reads, in one-letter code: Ribosome maturation factor RimP (153 aa).

This sequence belongs to the RimP family.

The protein localises to the cytoplasm. Required for maturation of 30S ribosomal subunits. The protein is Ribosome maturation factor RimP of Clostridium botulinum (strain ATCC 19397 / Type A).